A 218-amino-acid chain; its full sequence is Cell division protein SepF (218 aa).

Positions 25–115 (DVAASTDNVI…IANRREQYQQ (91 aa)) are disordered. Residues 29–43 (STDNVIPRSQQSVRA) are compositionally biased toward polar residues. The span at 47–63 (PKQEPRNNHVQQDHQAR) shows a compositional bias: basic and acidic residues. Positions 102 to 115 (STSSIANRREQYQQ) are enriched in polar residues.

It belongs to the SepF family. In terms of assembly, homodimer. Interacts with FtsZ.

The protein resides in the cytoplasm. Cell division protein that is part of the divisome complex and is recruited early to the Z-ring. Probably stimulates Z-ring formation, perhaps through the cross-linking of FtsZ protofilaments. Its function overlaps with FtsA. The protein is Cell division protein SepF of Streptococcus pyogenes serotype M5 (strain Manfredo).